A 361-amino-acid polypeptide reads, in one-letter code: 5-formaminoimidazole-4-carboxamide-1-(beta)-D-ribofuranosyl 5'-monophosphate synthetase (361 aa).

Residues H27 and S94 each contribute to the 5-amino-1-(5-phospho-beta-D-ribosyl)imidazole-4-carboxamide site. The region spanning 116-348 (RAILRWEAER…MGQRIAKEIK (233 aa)) is the ATP-grasp domain. ATP contacts are provided by residues 146–208 (PDEI…ANYC) and E230. N258 lines the 5-amino-1-(5-phospho-beta-D-ribosyl)imidazole-4-carboxamide pocket. Mg(2+) is bound by residues Q297 and E310.

This sequence belongs to the phosphohexose mutase family. The cofactor is Mg(2+). Requires Mn(2+) as cofactor.

The catalysed reaction is 5-amino-1-(5-phospho-beta-D-ribosyl)imidazole-4-carboxamide + formate + ATP = 5-formamido-1-(5-phospho-D-ribosyl)imidazole-4-carboxamide + ADP + phosphate. The protein operates within purine metabolism; IMP biosynthesis via de novo pathway; 5-formamido-1-(5-phospho-D-ribosyl)imidazole-4-carboxamide from 5-amino-1-(5-phospho-D-ribosyl)imidazole-4-carboxamide (formate route): step 1/1. Its function is as follows. Catalyzes the ATP- and formate-dependent formylation of 5-aminoimidazole-4-carboxamide-1-beta-d-ribofuranosyl 5'-monophosphate (AICAR) to 5-formaminoimidazole-4-carboxamide-1-beta-d-ribofuranosyl 5'-monophosphate (FAICAR) in the absence of folates. This Methanococcus vannielii (strain ATCC 35089 / DSM 1224 / JCM 13029 / OCM 148 / SB) protein is 5-formaminoimidazole-4-carboxamide-1-(beta)-D-ribofuranosyl 5'-monophosphate synthetase.